Consider the following 359-residue polypeptide: MMIGKTRSLTFTSLFFLLVISLIVNSYIFNSLLIINIFLISSLISLVITKYGFKIISRLNLLQNIRSEGPSLHFNKTNTPTMGGIFIILPFLLLLLIVNNYVDSVGILLLFFCTISFFIIGFLDDYLSIANKKNAGLKSNEKFTLQALIAVLFIIFASQSNYINPLITISNNWNMDTNIVIFPICFLTLVGLSNAVNLTDGLDGLAAGCSAIVFFGLGTEIFIKGQKDLIIYGLISYAMSGLCIGFLKYNKYPAKIFMGDTGSLTIGAALGSISILTNSFFTLFIISGIFITEALSVMIQVSFFKITKKLFKKGKRVFLMTPIHHHFELKGIKEEKIVENFWKVNILLIVLGIVLKINL.

Transmembrane regions (helical) follow at residues 7–27 (RSLT…VNSY), 28–48 (IFNS…SLVI), 82–102 (MGGI…NNYV), 103–123 (DSVG…IGFL), 147–167 (ALIA…NPLI), 179–199 (IVIF…VNLT), 203–223 (DGLA…EIFI), 229–249 (LIIY…FLKY), 256–276 (IFMG…ISIL), and 337–357 (IVEN…VLKI).

It belongs to the glycosyltransferase 4 family. MraY subfamily. The cofactor is Mg(2+).

The protein resides in the cell inner membrane. The enzyme catalyses UDP-N-acetyl-alpha-D-muramoyl-L-alanyl-gamma-D-glutamyl-meso-2,6-diaminopimeloyl-D-alanyl-D-alanine + di-trans,octa-cis-undecaprenyl phosphate = di-trans,octa-cis-undecaprenyl diphospho-N-acetyl-alpha-D-muramoyl-L-alanyl-D-glutamyl-meso-2,6-diaminopimeloyl-D-alanyl-D-alanine + UMP. It functions in the pathway cell wall biogenesis; peptidoglycan biosynthesis. Functionally, catalyzes the initial step of the lipid cycle reactions in the biosynthesis of the cell wall peptidoglycan: transfers peptidoglycan precursor phospho-MurNAc-pentapeptide from UDP-MurNAc-pentapeptide onto the lipid carrier undecaprenyl phosphate, yielding undecaprenyl-pyrophosphoryl-MurNAc-pentapeptide, known as lipid I. The protein is Phospho-N-acetylmuramoyl-pentapeptide-transferase of Prochlorococcus marinus subsp. pastoris (strain CCMP1986 / NIES-2087 / MED4).